Here is a 179-residue protein sequence, read N- to C-terminus: Large ribosomal subunit protein uL16m (179 aa).

The protein belongs to the universal ribosomal protein uL16 family. As to quaternary structure, component of the mitochondrial ribosome large subunit.

The protein resides in the mitochondrion. This chain is Large ribosomal subunit protein uL16m (RPL16), found in Arabidopsis thaliana (Mouse-ear cress).